Here is a 437-residue protein sequence, read N- to C-terminus: GTPase Obg (437 aa).

An Obg domain is found at 2–160 (SLFLDTARIE…KILLLELRVL (159 aa)). One can recognise an OBG-type G domain in the interval 161–338 (ADVGLVGFPS…LLARTSELLA (178 aa)). Residues 167-174 (GFPSVGKS), 192-196 (FTTIT), 214-217 (DMPG), 284-287 (NKMD), and 319-321 (SGL) contribute to the GTP site. 2 residues coordinate Mg(2+): Ser174 and Thr194. The OCT domain maps to 359 to 437 (GFEDEEKPFK…IQKFEFEFVD (79 aa)).

Belongs to the TRAFAC class OBG-HflX-like GTPase superfamily. OBG GTPase family. In terms of assembly, monomer. Requires Mg(2+) as cofactor.

The protein resides in the cytoplasm. In terms of biological role, an essential GTPase which binds GTP, GDP and possibly (p)ppGpp with moderate affinity, with high nucleotide exchange rates and a fairly low GTP hydrolysis rate. Plays a role in control of the cell cycle, stress response, ribosome biogenesis and in those bacteria that undergo differentiation, in morphogenesis control. This Lactococcus lactis subsp. cremoris (strain SK11) protein is GTPase Obg.